The chain runs to 512 residues: Cytochrome P450 72A15 (512 aa).

Residues 2–22 (EISVASVTISVVLAVVSWWIW) traverse the membrane as a helical segment. Residue C460 participates in heme binding.

This sequence belongs to the cytochrome P450 family. It depends on heme as a cofactor.

The protein localises to the membrane. The sequence is that of Cytochrome P450 72A15 (CYP72A15) from Arabidopsis thaliana (Mouse-ear cress).